A 456-amino-acid chain; its full sequence is Phospholipase A1 member A (456 aa).

The N-terminal stretch at 1–25 is a signal peptide; that stretch reads MPPGPWESCFWVGGLILWLSVGSSG. N-linked (GlcNAc...) asparagine glycosylation occurs at N79. The Nucleophile role is filled by S166. D190 serves as the catalytic Charge relay system. A disulfide bridge connects residues C245 and C258. H260 serves as the catalytic Charge relay system. Cystine bridges form between C282-C293 and C296-C304. N-linked (GlcNAc...) asparagine glycosylation is present at N365. The interval 374–456 is involved in the recognition of diacyl-phospholipids; sequence IPKQQRYGKG…VSCDLKIACV (83 aa).

Belongs to the AB hydrolase superfamily. Lipase family. In terms of tissue distribution, widely expressed. Expressed in placenta, prostate and liver. Weakly or not expressed in skin, leukocytes, platelets, colon, spleen, lung, muscle and kidney.

Its subcellular location is the secreted. The catalysed reaction is a 1,2-diacyl-sn-glycero-3-phospho-L-serine + H2O = a 2-acyl-sn-glycero-3-phospho-L-serine + a fatty acid + H(+). The enzyme catalyses 1,2-di-(9Z)-octadecenoyl-sn-glycero-3-phospho-L-serine + H2O = 2-(9Z-octadecenoyl)-sn-glycero-3-phospho-L-serine + (9Z)-octadecenoate + H(+). It carries out the reaction 1-hexadecanoyl-2-(5Z,8Z,11Z,14Z-eicosatetraenoyl)-sn-glycero-3-phospho-L-serine + H2O = 2-(5Z,8Z,11Z,14Z)-eicosatetraenoyl-sn-glycero-3-phospho-L-serine + hexadecanoate + H(+). It catalyses the reaction a 1-acyl-sn-glycero-3-phospho-L-serine + H2O = sn-glycero-3-phospho-L-serine + a fatty acid + H(+). The catalysed reaction is 1-(9Z-octadecenoyl)-sn-glycero-3-phospho-L-serine + H2O = sn-glycero-3-phospho-L-serine + (9Z)-octadecenoate + H(+). In terms of biological role, hydrolyzes the ester bond of the acyl group attached at the sn-1 position of phosphatidylserines (phospholipase A1 activity) and 1-acyl-2-lysophosphatidylserines (lysophospholipase activity) in the pathway of phosphatidylserines acyl chain remodeling. Cleaves phosphatidylserines exposed on the outer leaflet of the plasma membrane of apoptotic cells producing 2-acyl-1-lysophosphatidylserines, which in turn enhance mast cell activation and histamine production. Has no activity toward other glycerophospholipids including phosphatidylcholines, phosphatidylethanolamines, phosphatidic acids or phosphatidylinositols, or glycerolipids such as triolein. Functionally, hydrolyzes lyso-PS but not PS. The protein is Phospholipase A1 member A of Homo sapiens (Human).